Consider the following 225-residue polypeptide: Lectin (225 aa).

Homotetramer.

Its function is as follows. Chitin-binding lectin. Agglutinates rabbit erythrocytes, but not human erythrocytes. This Vachellia farnesiana (Sweet acacia) protein is Lectin.